We begin with the raw amino-acid sequence, 135 residues long: Large ribosomal subunit protein mL54 (135 aa).

It belongs to the mitochondrion-specific ribosomal protein mL54 family. As to quaternary structure, component of the mitochondrial ribosome large subunit (39S) which comprises a 16S rRNA and about 50 distinct proteins.

Its subcellular location is the mitochondrion. In Danio rerio (Zebrafish), this protein is Large ribosomal subunit protein mL54 (mrpl54).